The following is a 213-amino-acid chain: MKLTIALSKGRIFEETLPLLAAAGIVPAENPESSRKLIIGTNHPDVQLVIVRASDVPTYVQYGAADLGIAGRDVLIEHGGAGLYQPLDLNIAKCKMMVAVQEGFDYDAAVRRGARLKIATKYPQIAREHFAKKGVHVDIIKLYGSMELAPLVGLADAIVDLVSTGGTLRANKLAAVEHIIDISSRLVVNQAALKLKYDAIQPVLDAFAGAVPA.

Belongs to the ATP phosphoribosyltransferase family. Short subfamily. In terms of assembly, heteromultimer composed of HisG and HisZ subunits.

Its subcellular location is the cytoplasm. The enzyme catalyses 1-(5-phospho-beta-D-ribosyl)-ATP + diphosphate = 5-phospho-alpha-D-ribose 1-diphosphate + ATP. Its pathway is amino-acid biosynthesis; L-histidine biosynthesis; L-histidine from 5-phospho-alpha-D-ribose 1-diphosphate: step 1/9. Catalyzes the condensation of ATP and 5-phosphoribose 1-diphosphate to form N'-(5'-phosphoribosyl)-ATP (PR-ATP). Has a crucial role in the pathway because the rate of histidine biosynthesis seems to be controlled primarily by regulation of HisG enzymatic activity. The chain is ATP phosphoribosyltransferase from Chromobacterium violaceum (strain ATCC 12472 / DSM 30191 / JCM 1249 / CCUG 213 / NBRC 12614 / NCIMB 9131 / NCTC 9757 / MK).